Consider the following 556-residue polypeptide: Glutamine--tRNA ligase (556 aa).

A 'HIGH' region motif is present at residues 39 to 49 (PEPNGYLHIGH). Residues 40 to 42 (EPN) and 46 to 52 (HIGHAKS) contribute to the ATP site. L-glutamine is bound by residues aspartate 72 and tyrosine 217. ATP contacts are provided by residues threonine 236 and 267 to 268 (RL). The 'KMSKS' region signature appears at 274-278 (LTSKR).

This sequence belongs to the class-I aminoacyl-tRNA synthetase family. In terms of assembly, monomer.

It localises to the cytoplasm. The enzyme catalyses tRNA(Gln) + L-glutamine + ATP = L-glutaminyl-tRNA(Gln) + AMP + diphosphate. In Haemophilus ducreyi (strain 35000HP / ATCC 700724), this protein is Glutamine--tRNA ligase.